Reading from the N-terminus, the 469-residue chain is tRNA(Ile)-lysidine synthase (469 aa).

26–31 (SGGPDS) is an ATP binding site.

Belongs to the tRNA(Ile)-lysidine synthase family.

The protein localises to the cytoplasm. The catalysed reaction is cytidine(34) in tRNA(Ile2) + L-lysine + ATP = lysidine(34) in tRNA(Ile2) + AMP + diphosphate + H(+). Ligates lysine onto the cytidine present at position 34 of the AUA codon-specific tRNA(Ile) that contains the anticodon CAU, in an ATP-dependent manner. Cytidine is converted to lysidine, thus changing the amino acid specificity of the tRNA from methionine to isoleucine. The polypeptide is tRNA(Ile)-lysidine synthase (Clostridium perfringens (strain ATCC 13124 / DSM 756 / JCM 1290 / NCIMB 6125 / NCTC 8237 / Type A)).